The primary structure comprises 745 residues: Kinesin-like protein KIN-14M (745 aa).

The disordered stretch occupies residues 1–31 (MVGEMTNNGRIRPSFPVKDLTSNEGSEYGGP). Residues 1–35 (MVGEMTNNGRIRPSFPVKDLTSNEGSEYGGPVEFT) are globular. Microtubule-binding stretches follow at residues 65-77 (YVKR…RWFQ) and 198-745 (SLQL…LSLG). Coiled coils occupy residues 76–223 (FQEL…GEKE) and 259–389 (KDEL…GNIR). In terms of domain architecture, Kinesin motor spans 387–724 (NIRVFCRVRP…LRFAARVNAC (338 aa)). 472 to 479 (GQTGSGKT) contacts ATP.

The protein belongs to the TRAFAC class myosin-kinesin ATPase superfamily. Kinesin family. KIN-14 subfamily. Bind to microtubules in an ATP-insensitive manner (in vitro). Homodimer and heterodimer with KIN14N/KATC (in vitro).

It is found in the cytoplasm. Its subcellular location is the cytoskeleton. This chain is Kinesin-like protein KIN-14M, found in Arabidopsis thaliana (Mouse-ear cress).